A 348-amino-acid chain; its full sequence is S-adenosylmethionine:tRNA ribosyltransferase-isomerase (348 aa).

This sequence belongs to the QueA family. In terms of assembly, monomer.

It localises to the cytoplasm. The enzyme catalyses 7-aminomethyl-7-carbaguanosine(34) in tRNA + S-adenosyl-L-methionine = epoxyqueuosine(34) in tRNA + adenine + L-methionine + 2 H(+). Its pathway is tRNA modification; tRNA-queuosine biosynthesis. Its function is as follows. Transfers and isomerizes the ribose moiety from AdoMet to the 7-aminomethyl group of 7-deazaguanine (preQ1-tRNA) to give epoxyqueuosine (oQ-tRNA). The polypeptide is S-adenosylmethionine:tRNA ribosyltransferase-isomerase (Amoebophilus asiaticus (strain 5a2)).